Consider the following 235-residue polypeptide: Aspartate/glutamate leucyltransferase (235 aa).

This sequence belongs to the R-transferase family. Bpt subfamily.

The protein resides in the cytoplasm. The catalysed reaction is N-terminal L-glutamyl-[protein] + L-leucyl-tRNA(Leu) = N-terminal L-leucyl-L-glutamyl-[protein] + tRNA(Leu) + H(+). The enzyme catalyses N-terminal L-aspartyl-[protein] + L-leucyl-tRNA(Leu) = N-terminal L-leucyl-L-aspartyl-[protein] + tRNA(Leu) + H(+). Functionally, functions in the N-end rule pathway of protein degradation where it conjugates Leu from its aminoacyl-tRNA to the N-termini of proteins containing an N-terminal aspartate or glutamate. This is Aspartate/glutamate leucyltransferase from Pseudomonas putida (strain ATCC 47054 / DSM 6125 / CFBP 8728 / NCIMB 11950 / KT2440).